A 207-amino-acid polypeptide reads, in one-letter code: Putative 3-methyladenine DNA glycosylase (207 aa).

Belongs to the DNA glycosylase MPG family.

The protein is Putative 3-methyladenine DNA glycosylase of Listeria monocytogenes serotype 4a (strain HCC23).